Reading from the N-terminus, the 219-residue chain is 7-methyl-GTP pyrophosphatase (219 aa).

Residue Asp89 is the Proton acceptor of the active site.

The protein belongs to the Maf family. YceF subfamily. The cofactor is a divalent metal cation.

Its subcellular location is the cytoplasm. It catalyses the reaction N(7)-methyl-GTP + H2O = N(7)-methyl-GMP + diphosphate + H(+). In terms of biological role, nucleoside triphosphate pyrophosphatase that hydrolyzes 7-methyl-GTP (m(7)GTP). May have a dual role in cell division arrest and in preventing the incorporation of modified nucleotides into cellular nucleic acids. This is 7-methyl-GTP pyrophosphatase from Polaromonas sp. (strain JS666 / ATCC BAA-500).